A 218-amino-acid chain; its full sequence is Ras-related protein Rab11D (218 aa).

20–27 (GDSGVGKS) contributes to the GTP binding site. Residues 42-50 (SKSTIGVEF) carry the Effector region motif. GTP is bound by residues 68–72 (DTAGQ) and 126–129 (NKSD). Residues Cys215 and Cys216 are each lipidated (S-geranylgeranyl cysteine).

The protein belongs to the small GTPase superfamily. Rab family.

The protein resides in the cell membrane. This Lotus japonicus (Lotus corniculatus var. japonicus) protein is Ras-related protein Rab11D (RAB11D).